The sequence spans 497 residues: tRNA-2-methylthio-N(6)-dimethylallyladenosine synthase (497 aa).

One can recognise an MTTase N-terminal domain in the interval 4-120 (RSYEVRTFGC…LPVLLERARH (117 aa)). The [4Fe-4S] cluster site is built by C13, C49, C83, C157, C161, and C164. The 232-residue stretch at 143–374 (RASHHSAWVS…ALQDEVSWAQ (232 aa)) folds into the Radical SAM core domain. The TRAM domain occupies 376-445 (RELVGRRVEL…PHHLTADGPL (70 aa)).

The protein belongs to the methylthiotransferase family. MiaB subfamily. Monomer. [4Fe-4S] cluster is required as a cofactor.

The protein resides in the cytoplasm. It catalyses the reaction N(6)-dimethylallyladenosine(37) in tRNA + (sulfur carrier)-SH + AH2 + 2 S-adenosyl-L-methionine = 2-methylsulfanyl-N(6)-dimethylallyladenosine(37) in tRNA + (sulfur carrier)-H + 5'-deoxyadenosine + L-methionine + A + S-adenosyl-L-homocysteine + 2 H(+). In terms of biological role, catalyzes the methylthiolation of N6-(dimethylallyl)adenosine (i(6)A), leading to the formation of 2-methylthio-N6-(dimethylallyl)adenosine (ms(2)i(6)A) at position 37 in tRNAs that read codons beginning with uridine. The protein is tRNA-2-methylthio-N(6)-dimethylallyladenosine synthase of Frankia alni (strain DSM 45986 / CECT 9034 / ACN14a).